A 704-amino-acid polypeptide reads, in one-letter code: MDARHQPWFLVFATFLLVSGLPAPEKFVKDIDGGIDQDIFDINQGLGLDLFEGDIKLEANGKNSIIGDHKRWPHTIPYVLEDSLEMNAKGVILNAFERYRLKTCIDFKPWSGEANYISVFKGSGCWSSVGNIHAGKQELSIGTNCDRIATVQHEFLHALGFWHEQSRADRDDYVIIVWDRIQPGKEHNFNIYNDSVSDSLNVPYDYTSVMHYSKTAFQNGTESTIVTRISEFEDVIGQRMDFSDYDLLKLNQLYNCTSSLSFMDSCDFELENICGMIQSSGDSADWQRVSQVLSGPESDHSKMGQCKDSGFFMHFNTSILNEGATAMLESRLLYPKRGFQCLEFYLYNSGSGNDQLNIYTREYTTGQQGGVLTLQRQIKEVPIGSWQLHYVTLQVTKKFRVVFEGLRGPGTSSGGLSIDDINLSETRCPHHIWHIQNFTQILGGQDTSVYSPPFYSSKGYAFQIYMDLRSSTNVGIYFHLISGANDDQLQWPCPWQQATMTLLDQNPDIRQRMFNQRSITTDPTMTSDNGSYFWDRPSKVGVTDVFPNGTQFSRGIGYGTTVFITRERLKSREFIKGDDIYILLTVEDISHLNSTSAVPDPVPTLAVHNACSEVVCQNGGICVVQDGRAECKCPAGEDWWYMGKRCEKRGSTRDTVIIAVSSTVTVFAVMLIITLVSVYCTRRKYRKKARANTAAMTLENQHAF.

The N-terminal stretch at 1-20 (MDARHQPWFLVFATFLLVSG) is a signal peptide. Residues 21 to 64 (LPAPEKFVKDIDGGIDQDIFDINQGLGLDLFEGDIKLEANGKNS) constitute a propeptide that is removed on maturation. Topologically, residues 21–654 (LPAPEKFVKD…RCEKRGSTRD (634 aa)) are extracellular. The Peptidase M12A domain maps to 63–257 (NSIIGDHKRW…LKLNQLYNCT (195 aa)). Cystine bridges form between cysteine 104–cysteine 256, cysteine 125–cysteine 145, and cysteine 266–cysteine 428. Histidine 153 is a Zn(2+) binding site. Glutamate 154 is a catalytic residue. Residues histidine 157 and histidine 163 each coordinate Zn(2+). N-linked (GlcNAc...) asparagine glycosylation is found at asparagine 193, asparagine 219, asparagine 255, asparagine 316, asparagine 422, asparagine 437, asparagine 529, asparagine 548, and asparagine 593. Positions 261–430 (SFMDSCDFEL…INLSETRCPH (170 aa)) constitute an MAM domain. One can recognise an MATH domain in the interval 431–586 (HIWHIQNFTQ…GDDIYILLTV (156 aa)). Positions 607-647 (VHNACSEVVCQNGGICVVQDGRAECKCPAGEDWWYMGKRCE) constitute an EGF-like domain. Disulfide bonds link cysteine 611/cysteine 622, cysteine 616/cysteine 631, and cysteine 633/cysteine 646. Residues 655 to 678 (TVIIAVSSTVTVFAVMLIITLVSV) form a helical membrane-spanning segment. Over 679 to 704 (YCTRRKYRKKARANTAAMTLENQHAF) the chain is Cytoplasmic. Residue threonine 697 is modified to Phosphothreonine.

In terms of assembly, homotetramer consisting of disulfide-linked beta subunits, or heterotetramer of two alpha and two beta subunits formed by non-covalent association of two disulfide-linked heterodimers. Interacts with MBL2 through its carbohydrate moiety. This interaction may inhibit its catalytic activity. Interacts with TSPAN8. Zn(2+) serves as cofactor. In terms of processing, proteolytically activated by trypsin in the intestinal lumen and kallikrein-related peptidases in other tissues. N-glycosylated; contains high mannose and/or complex biantennary structures. Post-translationally, phosphorylated by PKC at multiple sites of its cytoplasmic part. Phosphorylation dcreases activity at the cell surface, leading to diminished substrate cleavage. Isoform 1 is expressed in kidney, intestinal brush borders, and salivary ducts. Isoform 2 has been found in carcinoma cells.

The protein resides in the cell membrane. Its subcellular location is the secreted. It catalyses the reaction Hydrolysis of proteins, including azocasein, and peptides. Hydrolysis of 5-His-|-Leu-6, 6-Leu-|-Cys-7, 14-Ala-|-Leu-15 and 19-Cys-|-Gly-20 bonds in insulin B chain.. With respect to regulation, strongly inhibited by fetuin-A/AHSG. Inhibited by cysteine and by the metal ion chelators EDTA and 1,10-phenanthroline. Not inhibited by 3,4-dichloroisocourmarin, soybean trypsin inhibitor, or the cysteine proteinase inhibitors iodoacetic acid and E-64. Its function is as follows. Membrane metallopeptidase that sheds many membrane-bound proteins. Exhibits a strong preference for acidic amino acids at the P1' position. Known substrates include: FGF19, VGFA, IL1B, IL18, procollagen I and III, E-cadherin, KLK7, gastrin, ADAM10, tenascin-C. The presence of several pro-inflammatory cytokine among substrates implicate MEP1B in inflammation. It is also involved in tissue remodeling due to its capability to degrade extracellular matrix components. The chain is Meprin A subunit beta (Mep1b) from Mus musculus (Mouse).